A 139-amino-acid chain; its full sequence is Ribulose bisphosphate carboxylase small subunit (139 aa).

The protein belongs to the RuBisCO small chain family. In terms of assembly, heterohexadecamer of 8 large and 8 small subunits.

The protein resides in the plastid. The protein localises to the chloroplast. In terms of biological role, ruBisCO catalyzes two reactions: the carboxylation of D-ribulose 1,5-bisphosphate, the primary event in carbon dioxide fixation, as well as the oxidative fragmentation of the pentose substrate in the photorespiration process. Both reactions occur simultaneously and in competition at the same active site. Although the small subunit is not catalytic it is essential for maximal activity. The protein is Ribulose bisphosphate carboxylase small subunit of Cylindrotheca sp. (strain N1) (Marine diatom).